A 366-amino-acid polypeptide reads, in one-letter code: Methyltransferase calH (366 aa).

Residues Thr189, Asp216, and 245-246 (NA) contribute to the S-adenosyl-L-methionine site.

Belongs to the class I-like SAM-binding methyltransferase superfamily.

The protein operates within secondary metabolite biosynthesis. Methyltransferase; part of the gene cluster that mediates the biosynthesis of calbistrin A and related compounds. Calbistrin A is a secondary metabolite with an interesting structure that was recently found to have bioactivity against leukemia cells. It consists of two polyketides linked by an ester bond: a bicyclic decalin containing polyketide and a linear 12 carbon dioic acid structure. The polyketide synthase calA is probably responsible for forming the decalin moiety. Because calA lacks a designated enoylreductase (ER) domain, the required activity is provided by the trans-enoyl reductase calK. Following release from the PKS, calF then probably catalyzes the oxidation and the subsequent Diels Alder cycloisomerization that lead to the formation of the decalin moiety. The decalin polyketide backbone includes two C-methyl groups, at C7 and C11 in backbone, of which the C7 position is probably methylated by the methyltransferase domain of calA. A candidate for adding the methyl group at C11, if not done by CalA, is the cluster methyltransferase calH. Several additional tailoring enzymes within the cluster could be involved in the modification of the decalin polyketide product. Those include the 3 cytochrome P450 monooxygenases CalE, CalG and CalL, of which one might be responsible for the introduction of the extra hydroxyl group attached to the backbone of the decalin moiety, at position C9 in the backbone, that allows for attachment of the linear moiety. One tailoring enzyme activity that is expected to be involved in biosynthesis of calbistrin is an acyltransferase for connecting the two polyketide synthase products, and which could be performed by the cluster acyltransferase calJ. The enzyme responsible for the biosynthesis of the linear moiety, probably a second PKS, has not been identified yet. The chain is Methyltransferase calH from Penicillium decumbens.